The chain runs to 277 residues: Large ribosomal subunit protein uL2 (277 aa).

Disordered regions lie at residues 37–59 (KNST…GGHK) and 221–265 (RGTA…KRTD). The span at 50 to 59 (TTRHRGGGHK) shows a compositional bias: basic residues. Positions 229 to 241 (DHPHGGGEGRTGE) are enriched in basic and acidic residues.

This sequence belongs to the universal ribosomal protein uL2 family. As to quaternary structure, part of the 50S ribosomal subunit. Forms a bridge to the 30S subunit in the 70S ribosome.

One of the primary rRNA binding proteins. Required for association of the 30S and 50S subunits to form the 70S ribosome, for tRNA binding and peptide bond formation. It has been suggested to have peptidyltransferase activity; this is somewhat controversial. Makes several contacts with the 16S rRNA in the 70S ribosome. This Chromobacterium violaceum (strain ATCC 12472 / DSM 30191 / JCM 1249 / CCUG 213 / NBRC 12614 / NCIMB 9131 / NCTC 9757 / MK) protein is Large ribosomal subunit protein uL2.